A 182-amino-acid chain; its full sequence is tRNA-splicing endonuclease (182 aa).

Catalysis depends on residues Y119, H127, and K158.

The protein belongs to the tRNA-intron endonuclease family. Archaeal short subfamily. In terms of assembly, homotetramer; although the tetramer contains four active sites, only two participate in the cleavage. Therefore, it should be considered as a dimer of dimers.

It catalyses the reaction pretRNA = a 3'-half-tRNA molecule with a 5'-OH end + a 5'-half-tRNA molecule with a 2',3'-cyclic phosphate end + an intron with a 2',3'-cyclic phosphate and a 5'-hydroxyl terminus.. Its function is as follows. Endonuclease that removes tRNA introns. Cleaves pre-tRNA at the 5'- and 3'-splice sites to release the intron. The products are an intron and two tRNA half-molecules bearing 2',3' cyclic phosphate and 5'-OH termini. Recognizes a pseudosymmetric substrate in which 2 bulged loops of 3 bases are separated by a stem of 4 bp. This chain is tRNA-splicing endonuclease, found in Saccharolobus islandicus (strain Y.N.15.51 / Yellowstone #2) (Sulfolobus islandicus).